The following is a 481-amino-acid chain: UDP-glycosyltransferase 88F3 (481 aa).

Residues serine 288, 357–358 (WA), 375–383 (HCGWNSVLE), and 397–400 (YAEQ) each bind UDP-alpha-D-glucose.

It belongs to the UDP-glycosyltransferase family.

Functionally, glycosyltransferase that may possess chalcone and dihydrochalcone 2'-O-glucosyltransferase activity. The sequence is that of UDP-glycosyltransferase 88F3 from Pyrus communis (Pear).